A 203-amino-acid chain; its full sequence is Eukaryotic translation initiation factor isoform 4E (203 aa).

A compositionally biased stretch (low complexity) spans 1–25; it reads MATETAGAVVESSSAATVPSPAPEA. Positions 1 to 27 are disordered; it reads MATETAGAVVESSSAATVPSPAPEAGS. MRNA is bound by residues 47 to 52, lysine 79, and 97 to 98; these read QGAAWG and WE. A disulfide bridge links cysteine 102 with cysteine 141. 148-153 provides a ligand contact to mRNA; sequence RQRQDK.

Belongs to the eukaryotic initiation factor 4E family. EIF4F is a multi-subunit complex, the composition of which varies with external and internal environmental conditions. It is composed of at least EIF4A, EIF4E and EIF4G. EIF4E is also known to interact with other partners. In higher plants two isoforms of EIF4F have been identified, named isoform EIF4F and isoform EIF(iso)4F. Isoform EIF4F has subunits p220 and p26, whereas isoform EIF(iso)4F has subunits p82 and p28. In terms of assembly, (Microbial infection) Interacts with the potyvirus peanut stripe virus (PStV) helper component proteinase (HC-Pro) in the cytoplasm and with PStV viral genome-linked protein (VPg) in the nucleus; these interactions are possible in susceptible hosts but impaired in resistant plants. According to the redox status, the Cys-102-Cys-141 disulfide bridge may have a role in regulating protein function by affecting its ability to bind capped mRNA. In terms of tissue distribution, expressed ubiquitously with highest levels in young leaves and roots, and lowest levels in flowers.

It is found in the cytoplasm. The protein resides in the nucleus. Its function is as follows. Component of the protein complex eIF4F, which is involved in the recognition of the mRNA cap, ATP-dependent unwinding of 5'-terminal secondary structure and recruitment of mRNA to the ribosome. Recognizes and binds the 7-methylguanosine-containing mRNA cap during an early step in the initiation of protein synthesis and facilitates ribosome binding by inducing the unwinding of the mRNAs secondary structures. Key component of recessive resistance to potyviruses such as peanut stripe virus (PStV). In terms of biological role, (Microbial infection) Susceptibility host factor required for viral infection by recruiting viral RNAs to the host ribosomal complex via an interaction with viral genome-linked protein (VPg). In Arachis hypogaea (Peanut), this protein is Eukaryotic translation initiation factor isoform 4E.